The sequence spans 54 residues: Ovomucoid (54 aa).

Residues 4–54 form the Kazal-like domain; sequence VDCSDYPRPDCTLEYMPLCGSDNKTYGNKCNFCNAVVDSNGTLTLSHFGKC. Disulfide bonds link Cys6–Cys36, Cys14–Cys33, and Cys22–Cys54. N-linked (GlcNAc...) asparagine glycosylation occurs at Asn43.

It localises to the secreted. The sequence is that of Ovomucoid from Dendrocygna eytoni (Plumed whistling-duck).